Here is a 551-residue protein sequence, read N- to C-terminus: Cytochrome bc1 complex cytochrome b subunit (551 aa).

Residues Phe-44–Leu-64 traverse the membrane as a helical segment. Heme is bound by residues His-113 and His-127. The next 3 membrane-spanning stretches (helical) occupy residues Ala-117–Phe-137, Trp-145–Met-165, and Val-188–Ile-208. Heme is bound by residues His-215 and His-230. 5 helical membrane passes run Ile-216 to Phe-236, Ser-265 to Ile-285, Pro-334 to Leu-354, Ile-380 to Ile-400, and Ile-417 to Leu-437. Positions Ala-532–His-551 are disordered.

Belongs to the cytochrome b family. In terms of assembly, the cytochrome bc1 complex is composed of a cytochrome b (QcrB), the Rieske iron-sulfur protein (QcrA) and a diheme cytochrome c (QcrC) subunit. Heme is required as a cofactor.

The protein resides in the cell membrane. The catalysed reaction is a quinol + 2 Fe(III)-[cytochrome c](out) = a quinone + 2 Fe(II)-[cytochrome c](out) + 2 H(+)(out). In terms of biological role, cytochrome b subunit of the cytochrome bc1 complex, an essential component of the respiratory electron transport chain required for ATP synthesis. The bc1 complex catalyzes the oxidation of ubiquinol and the reduction of cytochrome c in the respiratory chain. The bc1 complex operates through a Q-cycle mechanism that couples electron transfer to generation of the proton gradient that drives ATP synthesis. The cytochrome b subunit contains two ubiquinol reactive sites: the oxidation (QP) site and the reduction (QN) site. This chain is Cytochrome bc1 complex cytochrome b subunit (qcrB), found in Mycobacterium leprae (strain TN).